A 203-amino-acid polypeptide reads, in one-letter code: NAD(P)H dehydrogenase (quinone) (203 aa).

The 192-residue stretch at 3–194 folds into the Flavodoxin-like domain; the sequence is VLIVYYSMYG…AGARFQGRYV (192 aa). FMN-binding positions include 9–14 and 82–84; these read SMYGHI and TRF. Tyrosine 11 provides a ligand contact to NAD(+). Tryptophan 102 provides a ligand contact to substrate. FMN-binding positions include 117 to 123 and histidine 138; that span reads SSATQHG.

It belongs to the WrbA family. Requires FMN as cofactor.

It catalyses the reaction a quinone + NADH + H(+) = a quinol + NAD(+). The catalysed reaction is a quinone + NADPH + H(+) = a quinol + NADP(+). This is NAD(P)H dehydrogenase (quinone) from Geobacter sulfurreducens (strain ATCC 51573 / DSM 12127 / PCA).